The sequence spans 251 residues: Ribosome maturation factor RimP (251 aa).

The disordered stretch occupies residues 176–251; sequence SLRRGSAPPQ…ARLKNRDTLH (76 aa). The span at 186–196 shows a compositional bias: acidic residues; that stretch reads DGEEGDEEEGA. A compositionally biased stretch (basic and acidic residues) spans 216-226; the sequence is PKLDKKSDKPV.

This sequence belongs to the RimP family.

It localises to the cytoplasm. Its function is as follows. Required for maturation of 30S ribosomal subunits. This Methylorubrum extorquens (strain PA1) (Methylobacterium extorquens) protein is Ribosome maturation factor RimP.